We begin with the raw amino-acid sequence, 271 residues long: Replication-associated protein A (271 aa).

In terms of domain architecture, CRESS-DNA virus Rep endonuclease spans 11 to 114; it reads LHRNANTFLT…PLAVFERGTF (104 aa). The short motif at 18–21 is the RCR-1 element; the sequence is FLTY. 3 residues coordinate a divalent metal cation: Glu-52, His-60, and His-62. An RCR-2 motif is present at residues 60-62; sequence HLH. Tyr-100 (for DNA cleavage activity) is an active-site residue. The short motif at 100-103 is the RCR-3 element; the sequence is YILK. Glu-104 is a binding site for a divalent metal cation. Positions 174–186 are oligomerization; the sequence is SANKLFPDIQEEF. The segment at 197 to 201 is binding to RBR1; it reads LLCNE. Residues 220-229 are transactivation; the sequence is MLLQPTCYTV. Residues 244-264 are compositionally biased toward polar residues; it reads SQQMKDQESRASTSSVQQGQG. The segment at 244-271 is disordered; that stretch reads SQQMKDQESRASTSSVQQGQGNLLGPEV.

This sequence belongs to the geminiviridae Rep protein family. As to quaternary structure, homooligomer. Interacts with host retinoblastoma-related protein 1 (RBR1), and may thereby deregulate the host cell cycle. Part of the C- and V-complexes which are RepA-Rep-DNA complexes involved in the c-sense and v-sense transcription. Requires Mg(2+) as cofactor. It depends on Mn(2+) as a cofactor.

The protein resides in the host nucleus. The protein localises to the host cytoplasm. Implicated in enhancement of V-sense gene expression. Acts a an inhibitor of C-sense gene transcription. The protein is Replication-associated protein A of Avena sativa (Oat).